The following is a 188-amino-acid chain: Elongation factor P (188 aa).

The protein belongs to the elongation factor P family.

The protein localises to the cytoplasm. Its pathway is protein biosynthesis; polypeptide chain elongation. In terms of biological role, involved in peptide bond synthesis. Stimulates efficient translation and peptide-bond synthesis on native or reconstituted 70S ribosomes in vitro. Probably functions indirectly by altering the affinity of the ribosome for aminoacyl-tRNA, thus increasing their reactivity as acceptors for peptidyl transferase. The chain is Elongation factor P from Rhodopseudomonas palustris (strain BisA53).